The primary structure comprises 490 residues: Aspartyl/glutamyl-tRNA(Asn/Gln) amidotransferase subunit B (490 aa).

This sequence belongs to the GatB/GatE family. GatB subfamily. Heterotrimer of A, B and C subunits.

The catalysed reaction is L-glutamyl-tRNA(Gln) + L-glutamine + ATP + H2O = L-glutaminyl-tRNA(Gln) + L-glutamate + ADP + phosphate + H(+). The enzyme catalyses L-aspartyl-tRNA(Asn) + L-glutamine + ATP + H2O = L-asparaginyl-tRNA(Asn) + L-glutamate + ADP + phosphate + 2 H(+). Allows the formation of correctly charged Asn-tRNA(Asn) or Gln-tRNA(Gln) through the transamidation of misacylated Asp-tRNA(Asn) or Glu-tRNA(Gln) in organisms which lack either or both of asparaginyl-tRNA or glutaminyl-tRNA synthetases. The reaction takes place in the presence of glutamine and ATP through an activated phospho-Asp-tRNA(Asn) or phospho-Glu-tRNA(Gln). In Synechococcus sp. (strain JA-3-3Ab) (Cyanobacteria bacterium Yellowstone A-Prime), this protein is Aspartyl/glutamyl-tRNA(Asn/Gln) amidotransferase subunit B.